Here is a 761-residue protein sequence, read N- to C-terminus: Neurotrypsin (761 aa).

The N-terminal stretch at 1 to 21 (MALARCVLAVILGVLSEVARA) is a signal peptide. Positions 26–88 (HSPLHRPHPS…PTISRRCGAG (63 aa)) are disordered. Over residues 54–63 (TPRFPLPPRA) the composition is skewed to pro residues. The Kringle domain maps to 85–157 (CGAGEPWGNA…GKVDWGYCDC (73 aa)). Disulfide bonds link Cys-85-Cys-157, Cys-101-Cys-141, Cys-130-Cys-155, Cys-191-Cys-255, Cys-204-Cys-265, Cys-235-Cys-245, Cys-298-Cys-361, Cys-311-Cys-371, Cys-341-Cys-351, Cys-411-Cys-475, Cys-424-Cys-485, Cys-455-Cys-465, Cys-505-Cys-636, Cys-547-Cys-563, Cys-651-Cys-717, Cys-680-Cys-694, and Cys-707-Cys-736. N-linked (GlcNAc...) asparagine glycosylation is present at Asn-93. 3 SRCR domains span residues 166–267 (IRLV…SCAP), 273–373 (IRLS…TCYP), and 386–487 (IRLM…ICDY). A zymogen activation region region spans residues 505–516 (CGLRLLHRRQKR). The region spanning 517-760 (IIGGNNSLRG…FVPWIKSVTS (244 aa)) is the Peptidase S1 domain. The N-linked (GlcNAc...) asparagine glycan is linked to Asn-521. His-562 acts as the Charge relay system in catalysis. Asn-569 carries N-linked (GlcNAc...) asparagine glycosylation. Asp-612 (charge relay system) is an active-site residue. Ser-711 serves as the catalytic Charge relay system.

This sequence belongs to the peptidase S1 family.

The protein localises to the secreted. Plays a role in neuronal plasticity and the proteolytic action may subserve structural reorganizations associated with learning and memory operations. This Rattus norvegicus (Rat) protein is Neurotrypsin (Prss12).